Consider the following 245-residue polypeptide: 1-(5-phosphoribosyl)-5-[(5-phosphoribosylamino)methylideneamino] imidazole-4-carboxamide isomerase (245 aa).

The active-site Proton acceptor is Asp8. Catalysis depends on Asp130, which acts as the Proton donor.

Belongs to the HisA/HisF family.

It localises to the cytoplasm. It catalyses the reaction 1-(5-phospho-beta-D-ribosyl)-5-[(5-phospho-beta-D-ribosylamino)methylideneamino]imidazole-4-carboxamide = 5-[(5-phospho-1-deoxy-D-ribulos-1-ylimino)methylamino]-1-(5-phospho-beta-D-ribosyl)imidazole-4-carboxamide. It participates in amino-acid biosynthesis; L-histidine biosynthesis; L-histidine from 5-phospho-alpha-D-ribose 1-diphosphate: step 4/9. The sequence is that of 1-(5-phosphoribosyl)-5-[(5-phosphoribosylamino)methylideneamino] imidazole-4-carboxamide isomerase from Pseudomonas savastanoi pv. phaseolicola (strain 1448A / Race 6) (Pseudomonas syringae pv. phaseolicola (strain 1448A / Race 6)).